The sequence spans 235 residues: Exosome complex component RRP46 (235 aa).

A disordered region spans residues 1–21; the sequence is MEGAKRADANLLTDTGTESSP. Positions 12–21 are enriched in polar residues; that stretch reads LTDTGTESSP. Phosphoserine occurs at positions 20 and 23.

It belongs to the RNase PH family. Homodimer. Component of the RNA exosome core complex (Exo-9), composed of EXOSC1, EXOSC2, EXOSC3, EXOSC4, EXOSC5, EXOSC6, EXOSC7, EXOSC8 and EXOSC9; within the complex interacts with EXOSC3, EXOSC8, and EXOSC9. The catalytically inactive RNA exosome core complex (Exo-9) associates with the catalytic subunit EXOSC10/RRP6. Exo-9 may associate with DIS3 to form the nucleolar exosome complex, or DIS3L to form the cytoplasmic exosome complex. Exo-9 is formed by a hexameric base ring consisting of the heterodimers EXOSC4-EXOSC9, EXOSC5-EXOSC8 and EXOSC6-EXOSC7, and a cap ring consisting of EXOSC1, EXOSC2 and EXOSC3. The RNA exosome complex associates with cofactors C1D/RRP47, MPHOSPH6/MPP6 and MTREX/MTR4. Interacts with GTPBP1. Interacts with ZC3HAV1. Interacts with DDX17 only in the presence of ZC3HAV1 in an RNA-independent manner.

It is found in the nucleus. It localises to the nucleolus. The protein resides in the cytoplasm. Functionally, non-catalytic component of the RNA exosome complex which has 3'-&gt;5' exoribonuclease activity and participates in a multitude of cellular RNA processing and degradation events. In the nucleus, the RNA exosome complex is involved in proper maturation of stable RNA species such as rRNA, snRNA and snoRNA, in the elimination of RNA processing by-products and non-coding 'pervasive' transcripts, such as antisense RNA species and promoter-upstream transcripts (PROMPTs), and of mRNAs with processing defects, thereby limiting or excluding their export to the cytoplasm. The RNA exosome may be involved in Ig class switch recombination (CSR) and/or Ig variable region somatic hypermutation (SHM) by targeting AICDA deamination activity to transcribed dsDNA substrates. In the cytoplasm, the RNA exosome complex is involved in general mRNA turnover and specifically degrades inherently unstable mRNAs containing AU-rich elements (AREs) within their 3' untranslated regions, and in RNA surveillance pathways, preventing translation of aberrant mRNAs. It seems to be involved in degradation of histone mRNA. The catalytic inactive RNA exosome core complex of 9 subunits (Exo-9) is proposed to play a pivotal role in the binding and presentation of RNA for ribonucleolysis, and to serve as a scaffold for the association with catalytic subunits and accessory proteins or complexes. In vitro, EXOSC5 does not bind or digest single-stranded RNA and binds to double-stranded DNA without detectable DNase activity. The protein is Exosome complex component RRP46 (Exosc5) of Mus musculus (Mouse).